A 143-amino-acid chain; its full sequence is Nucleoside diphosphate kinase (143 aa).

Residues Lys-11, Phe-59, Arg-87, Thr-93, Arg-104, and Asn-114 each contribute to the ATP site. His-117 acts as the Pros-phosphohistidine intermediate in catalysis.

Belongs to the NDK family. As to quaternary structure, homotetramer. It depends on Mg(2+) as a cofactor.

Its subcellular location is the cytoplasm. It carries out the reaction a 2'-deoxyribonucleoside 5'-diphosphate + ATP = a 2'-deoxyribonucleoside 5'-triphosphate + ADP. The catalysed reaction is a ribonucleoside 5'-diphosphate + ATP = a ribonucleoside 5'-triphosphate + ADP. Its function is as follows. Major role in the synthesis of nucleoside triphosphates other than ATP. The ATP gamma phosphate is transferred to the NDP beta phosphate via a ping-pong mechanism, using a phosphorylated active-site intermediate. The protein is Nucleoside diphosphate kinase of Colwellia psychrerythraea (strain 34H / ATCC BAA-681) (Vibrio psychroerythus).